The sequence spans 268 residues: Mediator of RNA polymerase II transcription subunit 8-A (268 aa).

2 coiled-coil regions span residues 1–26 and 117–160; these read MQRE…KNSL and VEEL…EERE. The tract at residues 190–268 is disordered; the sequence is GLSNRRPPGQ…KSASMHPYQR (79 aa). Positions 223-246 are enriched in polar residues; that stretch reads VPMSLQSNQQQQHMAGVSMSQGNQ.

The protein belongs to the Mediator complex subunit 8 family. In terms of assembly, component of the Mediator complex. May be part of a multisubunit E3 ubiquitin-protein ligase complex.

The protein resides in the nucleus. Its pathway is protein modification; protein ubiquitination. In terms of biological role, component of the Mediator complex, a coactivator involved in the regulated transcription of nearly all RNA polymerase II-dependent genes. Mediator functions as a bridge to convey information from gene-specific regulatory proteins to the basal RNA polymerase II transcription machinery. Mediator is recruited to promoters by direct interactions with regulatory proteins and serves as a scaffold for the assembly of a functional preinitiation complex with RNA polymerase II and the general transcription factors. May play a role as a target recruitment subunit in E3 ubiquitin-protein ligase complexes and thus in ubiquitination and subsequent proteasomal degradation of target proteins. The polypeptide is Mediator of RNA polymerase II transcription subunit 8-A (med8-a) (Xenopus laevis (African clawed frog)).